Consider the following 368-residue polypeptide: tRNA-specific 2-thiouridylase MnmA (368 aa).

ATP is bound by residues 11–18 (GMSGGVDS) and M37. Residues 97–99 (NPD) are interaction with target base in tRNA. Residue C102 is the Nucleophile of the active site. C102 and C199 are oxidised to a cystine. G127 contributes to the ATP binding site. The tract at residues 149-151 (KDQ) is interaction with tRNA. C199 acts as the Cysteine persulfide intermediate in catalysis. Residues 311–312 (RY) are interaction with tRNA.

It belongs to the MnmA/TRMU family. Interacts with TusE.

It is found in the cytoplasm. The catalysed reaction is S-sulfanyl-L-cysteinyl-[protein] + uridine(34) in tRNA + AH2 + ATP = 2-thiouridine(34) in tRNA + L-cysteinyl-[protein] + A + AMP + diphosphate + H(+). In terms of biological role, catalyzes the 2-thiolation of uridine at the wobble position (U34) of tRNA(Lys), tRNA(Glu) and tRNA(Gln), leading to the formation of s(2)U34, the first step of tRNA-mnm(5)s(2)U34 synthesis. Sulfur is provided by IscS, via a sulfur-relay system. Binds ATP and its substrate tRNAs. The chain is tRNA-specific 2-thiouridylase MnmA from Salmonella arizonae (strain ATCC BAA-731 / CDC346-86 / RSK2980).